Reading from the N-terminus, the 349-residue chain is DNA replication and repair protein RecF (349 aa).

Position 30–37 (30–37 (GKNGSGKT)) interacts with ATP.

Belongs to the RecF family.

It localises to the cytoplasm. Its function is as follows. The RecF protein is involved in DNA metabolism; it is required for DNA replication and normal SOS inducibility. RecF binds preferentially to single-stranded, linear DNA. It also seems to bind ATP. The chain is DNA replication and repair protein RecF from Francisella tularensis subsp. tularensis (strain FSC 198).